The chain runs to 471 residues: Heat shock 70 kDa protein 13 (471 aa).

Positions 1-22 (MAGEMTILGSAVLTLLLAGYLA) are cleaved as a signal peptide. The segment covering 317–330 (DSKEPQNGDSELPK) has biased composition (basic and acidic residues). The segment at 317 to 350 (DSKEPQNGDSELPKDQLTPGDGHHVNRVFRPGLS) is disordered.

This sequence belongs to the heat shock protein 70 family. In terms of assembly, binds UBQLN2.

The protein resides in the microsome. It localises to the endoplasmic reticulum. Functionally, has peptide-independent ATPase activity. The protein is Heat shock 70 kDa protein 13 (Hspa13) of Mus musculus (Mouse).